A 146-amino-acid polypeptide reads, in one-letter code: Hemoglobin subunit beta (146 aa).

The Globin domain maps to 2-146; that stretch reads HWSAEEKQLI…VAHALARKYH (145 aa). Positions 63 and 92 each coordinate heme b.

It belongs to the globin family. In terms of assembly, heterotetramer of two alpha chains and two beta chains. Red blood cells.

Functionally, involved in oxygen transport from the lung to the various peripheral tissues. The protein is Hemoglobin subunit beta (HBB) of Anser indicus (Bar-headed goose).